A 140-amino-acid chain; its full sequence is Nucleoside diphosphate kinase (140 aa).

ATP is bound by residues Lys-11, Phe-59, Arg-87, Thr-93, Arg-104, and Asn-114. The active-site Pros-phosphohistidine intermediate is His-117.

The protein belongs to the NDK family. Homotetramer. Mg(2+) serves as cofactor.

The protein resides in the cytoplasm. The catalysed reaction is a 2'-deoxyribonucleoside 5'-diphosphate + ATP = a 2'-deoxyribonucleoside 5'-triphosphate + ADP. It catalyses the reaction a ribonucleoside 5'-diphosphate + ATP = a ribonucleoside 5'-triphosphate + ADP. Functionally, major role in the synthesis of nucleoside triphosphates other than ATP. The ATP gamma phosphate is transferred to the NDP beta phosphate via a ping-pong mechanism, using a phosphorylated active-site intermediate. The chain is Nucleoside diphosphate kinase from Persephonella marina (strain DSM 14350 / EX-H1).